The primary structure comprises 1090 residues: DNA damage-binding protein 1 (1090 aa).

The protein belongs to the DDB1 family. Component of the UV-DDB complex, which is composed of DDB1 and DDB2. As to expression, expressed in proliferating tissues. Highly expressed in shoot apical meristem (SAM). Expressed in roots, young leaves, flag leaves, and panicles. Not detected in mature leaves.

It localises to the nucleus. In terms of biological role, required for DNA repair. Binds to DDB2 to form the UV-damaged DNA-binding protein complex (the UV-DDB complex). The UV-DDB complex may recognize UV-induced DNA damage and recruit proteins of the nucleotide excision repair pathway (the NER pathway) to initiate DNA repair. May function as the substrate recognition module for a DCX (DDB1-CUL4-X-box) E3 ubiquitin-protein ligase complex. This Oryza sativa subsp. japonica (Rice) protein is DNA damage-binding protein 1.